Here is a 604-residue protein sequence, read N- to C-terminus: UvrABC system protein C (604 aa).

One can recognise a GIY-YIG domain in the interval 12 to 90; that stretch reads TAPGVYLMRD…IKQHQPRYNL (79 aa). Residues 200–235 form the UVR domain; it reads KDLVSGFRQRMKEAAEGLHYEEAARWRDLLKAIDTT.

This sequence belongs to the UvrC family. As to quaternary structure, interacts with UvrB in an incision complex.

Its subcellular location is the cytoplasm. The UvrABC repair system catalyzes the recognition and processing of DNA lesions. UvrC both incises the 5' and 3' sides of the lesion. The N-terminal half is responsible for the 3' incision and the C-terminal half is responsible for the 5' incision. The polypeptide is UvrABC system protein C (Trichlorobacter lovleyi (strain ATCC BAA-1151 / DSM 17278 / SZ) (Geobacter lovleyi)).